A 145-amino-acid polypeptide reads, in one-letter code: RNA polymerase-binding transcription factor DksA (145 aa).

Zn(2+) contacts are provided by Cys-108, Cys-111, Cys-129, and Cys-132. The segment at 108–132 (CDCCGEEIGIRRLEARPTADLCIDC) adopts a dksA C4-type zinc-finger fold.

The protein belongs to the DksA family. In terms of assembly, interacts directly with the RNA polymerase.

The protein resides in the cytoplasm. Functionally, transcription factor that acts by binding directly to the RNA polymerase (RNAP). Required for negative regulation of rRNA expression and positive regulation of several amino acid biosynthesis promoters. Also required for regulation of fis expression. The protein is RNA polymerase-binding transcription factor DksA of Haemophilus influenzae (strain ATCC 51907 / DSM 11121 / KW20 / Rd).